The following is a 330-amino-acid chain: Solute-binding protein NAS141_03721 (330 aa).

The signal sequence occupies residues 1-27 (MSFFTKTAQLVSGAAVAATLFTATAQA). Alpha-D-mannuronate-binding positions include glutamate 75, asparagine 97, arginine 153, arginine 173, tyrosine 196, 213–214 (NE), and arginine 240. Alpha-D-taluronate contacts are provided by residues glutamate 75, asparagine 97, arginine 153, arginine 173, tyrosine 196, 213-214 (NE), and arginine 240.

Belongs to the bacterial solute-binding protein 7 family. As to quaternary structure, the complex is comprised of an extracytoplasmic solute-binding protein and a heteromeric permease formed by two transmembrane proteins.

The protein localises to the periplasm. Solute-binding protein that binds D-mannuronate and D-taluronate (in vitro). Probably part of a tripartite ATP-independent periplasmic (TRAP) transport system that mediates solute transport into the cytoplasm. This chain is Solute-binding protein NAS141_03721, found in Sulfitobacter sp. (strain NAS-14.1).